The primary structure comprises 376 residues: cAMP-dependent protein kinase type I regulatory subunit (376 aa).

The dimerization and phosphorylation stretch occupies residues 1 to 131 (MSYMMAKTLE…ALSKAIAKNV (131 aa)). The tract at residues 72-93 (PDDCEDLSPMPQTAAPPVRRRG) is disordered. A Pseudophosphorylation motif motif is present at residues 91 to 95 (RRGGI). At serine 96 the chain carries Phosphoserine. Residues 132–247 (LFAH…FLSR), glutamate 197, arginine 206, 250–371 (ILES…YNSF), glutamate 321, and arginine 330 contribute to the 3',5'-cyclic AMP site.

Belongs to the cAMP-dependent kinase regulatory chain family. In terms of assembly, tetramer, composed of 2 regulatory (R) and 2 catalytic (C) subunits. In the presence of cAMP it dissociates into 2 active monomeric C subunits and an R dimer. In terms of processing, the pseudophosphorylation site binds to the substrate-binding region of the catalytic chain but is not phosphorylated. The physiological significance of phosphorylations by other kinases is unclear.

The chain is cAMP-dependent protein kinase type I regulatory subunit (Pka-R1) from Drosophila melanogaster (Fruit fly).